Reading from the N-terminus, the 115-residue chain is Replication initiation control protein YabA (115 aa).

Zn(2+)-binding residues include H86, C88, C102, and C105.

This sequence belongs to the YabA family. Homotetramer. Interacts with both DnaA and DnaN, acting as a bridge between these two proteins. Requires Zn(2+) as cofactor.

It is found in the cytoplasm. The protein resides in the nucleoid. Functionally, involved in control of chromosome replication initiation. Inhibits the cooperative binding of DnaA to the oriC region, thus negatively regulating initiation of chromosome replication. Inhibits the ability of DnaA-ATP to form a helix on DNA; does not disassemble preformed DnaA-DNA helices. Decreases the residence time of DnaA on the chromosome at its binding sites (oriC, replication forks and promoter-binding sites). Tethers DnaA to the replication machinery via the DNA polymerase beta sliding clamp subunit (dnaN). Associates with oriC and other DnaA targets on the chromosome in a DnaA-dependent manner. The protein is Replication initiation control protein YabA of Enterococcus faecalis (strain ATCC 700802 / V583).